Reading from the N-terminus, the 584-residue chain is Protein BONZAI 3 (584 aa).

The segment at 1-23 is disordered; it reads MGGCLSGDVKGGKQAIGGVQQRP. A lipid anchor (N-myristoyl glycine) is attached at G2. C2 domains follow at residues 34-167 and 178-305; these read HNDA…TLTL and NRNL…NFVY. Residues D67, D73, D126, D128, and D145 each contribute to the Ca(2+) site. Positions 344 to 563 constitute a VWFA domain; the sequence is NFMVAVDFTA…SVVQALLEEL (220 aa).

This sequence belongs to the copine family. In terms of assembly, interacts with BAP1 and BAP2. The cofactor is Ca(2+). Expressed at an extremely low level.

Its subcellular location is the cell membrane. In terms of biological role, negative regulator of cell death and defense responses. Repress a number of R genes and may have effects in promoting growth and development. May function in membrane trafficking and in fusion of vesicles with plasma membrane. This chain is Protein BONZAI 3 (BON3), found in Arabidopsis thaliana (Mouse-ear cress).